Reading from the N-terminus, the 339-residue chain is MSSGRGSRIPEYWYGQVPVPPFMRFMEVIYAGAVSLRRLAYRRGWRRRYGVAVPVVVIGNLVAGGTGKTPLTIEIVARLREAGWTPGIASRGYGRRDPKTPRWIQPDTPIELAGDEPAMIAWKTGMRVRVDVDRSAAARALVAEGCDIVVCDDGLQHYRLMRDIEIEVIDGQRRYGNGHLLPAGPLREPMVRGRLCDFRVLNAGQYSDRPTSGFGPSDWQMRLHIDHAQSLQGSRRRSLDAFSGQRVHAVAGIAHPERFFSMLRQRGIGVVPHAFPDHHFYRAEDFTFGSRLPVLMTEKDAVKCRAFADDWFFSVPLRVELPTVFWTALFDRLERLVSC.

An ATP-binding site is contributed by 62 to 69; sequence VAGGTGKT.

The protein belongs to the LpxK family.

The enzyme catalyses a lipid A disaccharide + ATP = a lipid IVA + ADP + H(+). It participates in glycolipid biosynthesis; lipid IV(A) biosynthesis; lipid IV(A) from (3R)-3-hydroxytetradecanoyl-[acyl-carrier-protein] and UDP-N-acetyl-alpha-D-glucosamine: step 6/6. In terms of biological role, transfers the gamma-phosphate of ATP to the 4'-position of a tetraacyldisaccharide 1-phosphate intermediate (termed DS-1-P) to form tetraacyldisaccharide 1,4'-bis-phosphate (lipid IVA). The sequence is that of Tetraacyldisaccharide 4'-kinase from Xylella fastidiosa (strain M23).